The primary structure comprises 156 residues: Arginine repressor (156 aa).

This sequence belongs to the ArgR family.

It localises to the cytoplasm. Its pathway is amino-acid biosynthesis; L-arginine biosynthesis [regulation]. Its function is as follows. Regulates arginine biosynthesis genes. This chain is Arginine repressor, found in Vibrio vulnificus (strain CMCP6).